A 298-amino-acid polypeptide reads, in one-letter code: N-acetylmuramic acid 6-phosphate etherase (298 aa).

The region spanning 55 to 218 (AANRYKKGGR…STGVMIRQGK (164 aa)) is the SIS domain. Glu-83 functions as the Proton donor in the catalytic mechanism. Glu-114 is an active-site residue.

The protein belongs to the GCKR-like family. MurNAc-6-P etherase subfamily. As to quaternary structure, homodimer.

The enzyme catalyses N-acetyl-D-muramate 6-phosphate + H2O = N-acetyl-D-glucosamine 6-phosphate + (R)-lactate. It functions in the pathway amino-sugar metabolism; N-acetylmuramate degradation. In terms of biological role, specifically catalyzes the cleavage of the D-lactyl ether substituent of MurNAc 6-phosphate, producing GlcNAc 6-phosphate and D-lactate. This is N-acetylmuramic acid 6-phosphate etherase from Lactobacillus acidophilus (strain ATCC 700396 / NCK56 / N2 / NCFM).